The following is a 553-amino-acid chain: Dihydroxy-acid dehydratase (553 aa).

Residue Asp-78 coordinates Mg(2+). Cys-119 provides a ligand contact to [2Fe-2S] cluster. Residues Asp-120 and Lys-121 each coordinate Mg(2+). Lys-121 carries the N6-carboxylysine modification. [2Fe-2S] cluster is bound at residue Cys-193. Glu-441 contributes to the Mg(2+) binding site. Ser-467 acts as the Proton acceptor in catalysis.

Belongs to the IlvD/Edd family. Homodimer. [2Fe-2S] cluster serves as cofactor. Mg(2+) is required as a cofactor.

The enzyme catalyses (2R)-2,3-dihydroxy-3-methylbutanoate = 3-methyl-2-oxobutanoate + H2O. It carries out the reaction (2R,3R)-2,3-dihydroxy-3-methylpentanoate = (S)-3-methyl-2-oxopentanoate + H2O. It participates in amino-acid biosynthesis; L-isoleucine biosynthesis; L-isoleucine from 2-oxobutanoate: step 3/4. Its pathway is amino-acid biosynthesis; L-valine biosynthesis; L-valine from pyruvate: step 3/4. Functions in the biosynthesis of branched-chain amino acids. Catalyzes the dehydration of (2R,3R)-2,3-dihydroxy-3-methylpentanoate (2,3-dihydroxy-3-methylvalerate) into 2-oxo-3-methylpentanoate (2-oxo-3-methylvalerate) and of (2R)-2,3-dihydroxy-3-methylbutanoate (2,3-dihydroxyisovalerate) into 2-oxo-3-methylbutanoate (2-oxoisovalerate), the penultimate precursor to L-isoleucine and L-valine, respectively. This Geobacter metallireducens (strain ATCC 53774 / DSM 7210 / GS-15) protein is Dihydroxy-acid dehydratase.